A 590-amino-acid chain; its full sequence is Aspartate--tRNA(Asp/Asn) ligase (590 aa).

Glutamate 176 is a binding site for L-aspartate. Positions 200-203 are aspartate; the sequence is QLFK. Residues arginine 222 and histidine 451 each contribute to the L-aspartate site. 222 to 224 provides a ligand contact to ATP; sequence RDE. Glutamate 485 contacts ATP. Arginine 492 serves as a coordination point for L-aspartate. 537-540 serves as a coordination point for ATP; the sequence is GIDR.

Belongs to the class-II aminoacyl-tRNA synthetase family. Type 1 subfamily. As to quaternary structure, homodimer.

The protein resides in the cytoplasm. It catalyses the reaction tRNA(Asx) + L-aspartate + ATP = L-aspartyl-tRNA(Asx) + AMP + diphosphate. Its function is as follows. Aspartyl-tRNA synthetase with relaxed tRNA specificity since it is able to aspartylate not only its cognate tRNA(Asp) but also tRNA(Asn). Reaction proceeds in two steps: L-aspartate is first activated by ATP to form Asp-AMP and then transferred to the acceptor end of tRNA(Asp/Asn). In Ehrlichia chaffeensis (strain ATCC CRL-10679 / Arkansas), this protein is Aspartate--tRNA(Asp/Asn) ligase.